Here is a 100-residue protein sequence, read N- to C-terminus: NADH-quinone oxidoreductase subunit K (100 aa).

Helical transmembrane passes span 4–24 (MQHGLILAAILFTLGLTGLLI), 28–48 (LIFMLISLEVMINSAALAWVV), and 60–80 (IFYLLAITLAAAEASIGLALL).

The protein belongs to the complex I subunit 4L family. In terms of assembly, NDH-1 is composed of 13 different subunits. Subunits NuoA, H, J, K, L, M, N constitute the membrane sector of the complex.

Its subcellular location is the cell membrane. The enzyme catalyses a quinone + NADH + 5 H(+)(in) = a quinol + NAD(+) + 4 H(+)(out). Functionally, NDH-1 shuttles electrons from NADH, via FMN and iron-sulfur (Fe-S) centers, to quinones in the respiratory chain. The immediate electron acceptor for the enzyme in this species is believed to be ubiquinone. Couples the redox reaction to proton translocation (for every two electrons transferred, four hydrogen ions are translocated across the cytoplasmic membrane), and thus conserves the redox energy in a proton gradient. The polypeptide is NADH-quinone oxidoreductase subunit K (Hamiltonella defensa subsp. Acyrthosiphon pisum (strain 5AT)).